Here is a 275-residue protein sequence, read N- to C-terminus: Large ribosomal subunit protein uL2cz/uL2cy (275 aa).

Disordered regions lie at residues 1 to 26 (MAIH…VKSN) and 224 to 275 (MNPV…RRTK). Residues 7–26 (KTSTPSTRNGTVDSRQVKSN) show a composition bias toward polar residues.

It belongs to the universal ribosomal protein uL2 family. As to quaternary structure, part of the 50S ribosomal subunit.

The protein resides in the plastid. Its subcellular location is the chloroplast. The polypeptide is Large ribosomal subunit protein uL2cz/uL2cy (rpl2-A) (Phaseolus angularis (Azuki bean)).